A 295-amino-acid polypeptide reads, in one-letter code: Ribosomal RNA small subunit methyltransferase A (295 aa).

Positions 29, 31, 56, 77, 102, and 128 each coordinate S-adenosyl-L-methionine.

It belongs to the class I-like SAM-binding methyltransferase superfamily. rRNA adenine N(6)-methyltransferase family. RsmA subfamily.

The protein resides in the cytoplasm. The enzyme catalyses adenosine(1518)/adenosine(1519) in 16S rRNA + 4 S-adenosyl-L-methionine = N(6)-dimethyladenosine(1518)/N(6)-dimethyladenosine(1519) in 16S rRNA + 4 S-adenosyl-L-homocysteine + 4 H(+). In terms of biological role, specifically dimethylates two adjacent adenosines (A1518 and A1519) in the loop of a conserved hairpin near the 3'-end of 16S rRNA in the 30S particle. May play a critical role in biogenesis of 30S subunits. The sequence is that of Ribosomal RNA small subunit methyltransferase A from Listeria innocua serovar 6a (strain ATCC BAA-680 / CLIP 11262).